The following is a 454-amino-acid chain: Jacalin-related lectin 37 (454 aa).

In terms of domain architecture, Jacalin-type lectin spans 295–438 (SRFTPPRGIQ…LTALGVHFSP (144 aa)).

Belongs to the jacalin lectin family.

This is Jacalin-related lectin 37 (JAL37) from Arabidopsis thaliana (Mouse-ear cress).